Consider the following 697-residue polypeptide: MANKREFPLERTRNIGIMAHIDAGKTTTTERILYYTGKIHKIGETHEGASQMDWMAQEQERGITITSAATTAAWKNHRINIIDTPGHVDFTIEVERSLRVLDGAVAVLDAQAGVEPQTETVWRQASDYDVPRIVFANKMDKLGADFDFSVQSIHDRLQANALPIQMPIGAEDDFQGIIDLVEMKADLYDVDELGTEWETVDVPDEYKEEAEKRRNEMIEQLADIDENIMEKYLGGEDISVAEIKAAIRKGTLALELFPVLAGSAFKNKGVQMMLDAVVDYLPSPLDVKPYSATDPETGDQVELIAGDDKSFAALAFKVATDPFVGRLTFIRVYQGTLESGSYVLNATKGKRERVGRLLQMHSNQRQEIPEVFSGDIAAAIGLKNTTTGDSLTDPAHPLQLESMVFPDPVIEVAVEPKSKADQDKMDIALQKLAEEDPSFRAETNPETGETVIAGMGELHLDIIVDRMKREFNVEATIGAPQVSYREAFTKKTSAQGKFVRQSGGKGQYGDVWVEFEPNEEGKGFEFEDAIVGGVVPREYIPSVEEGLREAMNNGVLAGYPLVDVKAKLYDGSYHDVDSSEAAFKVAASLALRAAAKTAAPVILEPIMKVEIRVPEEYMGDIMGQVTARRGRVDGMEAIAGAEEIHAFVPLSEMFGYATTLRSASQGRGTFTMTFDHYEAVPKSIQEEIIKKNGGHAE.

The tr-type G domain occupies 10-285; it reads ERTRNIGIMA…AVVDYLPSPL (276 aa). Residues 19-26, 83-87, and 137-140 each bind GTP; these read AHIDAGKT, DTPGH, and NKMD.

Belongs to the TRAFAC class translation factor GTPase superfamily. Classic translation factor GTPase family. EF-G/EF-2 subfamily.

The protein resides in the cytoplasm. In terms of biological role, catalyzes the GTP-dependent ribosomal translocation step during translation elongation. During this step, the ribosome changes from the pre-translocational (PRE) to the post-translocational (POST) state as the newly formed A-site-bound peptidyl-tRNA and P-site-bound deacylated tRNA move to the P and E sites, respectively. Catalyzes the coordinated movement of the two tRNA molecules, the mRNA and conformational changes in the ribosome. The protein is Elongation factor G of Pediococcus pentosaceus (strain ATCC 25745 / CCUG 21536 / LMG 10740 / 183-1w).